The primary structure comprises 126 residues: MPEPAKSAPAPKKGSKKAVTKAQKKDGKKRKRSRKESYSIYVYKVLKQVHPDTGISSKAMGIMNSFVNDIFERIAGEASRLAHYNKRSTITSREIQTAVRLLLPGELAKHAVSEGTKAVTKYTSAK.

Low complexity predominate over residues 1 to 12 (MPEPAKSAPAPK). Residues 1–35 (MPEPAKSAPAPKKGSKKAVTKAQKKDGKKRKRSRK) are disordered. P2 carries the N-acetylproline modification. E3 carries the post-translational modification ADP-ribosyl glutamic acid. An N6-(2-hydroxyisobutyryl)lysine; alternate modification is found at K6. K6 carries the post-translational modification N6-(beta-hydroxybutyryl)lysine; alternate. K6 carries the N6-acetyllysine; alternate modification. K6 carries the N6-butyryllysine; alternate modification. K6 carries the post-translational modification N6-crotonyllysine; alternate. N6-lactoyllysine; alternate is present on K6. A Glycyl lysine isopeptide (Lys-Gly) (interchain with G-Cter in SUMO2); alternate cross-link involves residue K6. S7 carries the post-translational modification ADP-ribosylserine. K12 carries the post-translational modification N6-(beta-hydroxybutyryl)lysine; alternate. N6-acetyllysine; alternate occurs at positions 12 and 13. 2 positions are modified to N6-crotonyllysine; alternate: K12 and K13. An N6-lactoyllysine; alternate modification is found at K12. N6-(2-hydroxyisobutyryl)lysine; alternate is present on K13. S15 carries the phosphoserine; by STK4/MST1 modification. An N6-acetyllysine; alternate mark is found at K16, K17, K21, and K24. An N6-crotonyllysine; alternate mark is found at K16, K17, K21, and K24. K16, K17, K21, and K24 each carry N6-lactoyllysine; alternate. 2 positions are modified to N6-(beta-hydroxybutyryl)lysine; alternate: K17 and K21. Position 17 is an N6-glutaryllysine; alternate (K17). N6-(2-hydroxyisobutyryl)lysine; alternate occurs at positions 21 and 24. K21 bears the N6-butyryllysine; alternate mark. Residue K21 forms a Glycyl lysine isopeptide (Lys-Gly) (interchain with G-Cter in SUMO2); alternate linkage. At K25 the chain carries N6-(2-hydroxyisobutyryl)lysine. The residue at position 35 (K35) is an N6-(2-hydroxyisobutyryl)lysine; alternate. K35 is subject to N6-(beta-hydroxybutyryl)lysine; alternate. At K35 the chain carries N6-crotonyllysine; alternate. K35 is subject to N6-glutaryllysine; alternate. N6-succinyllysine; alternate is present on K35. K35 participates in a covalent cross-link: Glycyl lysine isopeptide (Lys-Gly) (interchain with G-Cter in ubiquitin); alternate. E36 is modified (polyADP-ribosyl glutamic acid). The residue at position 37 (S37) is a Phosphoserine; by AMPK. Residues K44, K47, and K58 each carry the N6-(2-hydroxyisobutyryl)lysine; alternate modification. K44 bears the N6-lactoyllysine; alternate mark. N6-glutaryllysine; alternate is present on residues K44 and K47. Position 47 is an N6-methyllysine; alternate (K47). K58 carries the N6,N6-dimethyllysine; alternate modification. The residue at position 80 (R80) is a Dimethylated arginine. K86 carries the post-translational modification N6-(2-hydroxyisobutyryl)lysine; alternate. K86 bears the N6-(beta-hydroxybutyryl)lysine; alternate mark. K86 carries the post-translational modification N6-acetyllysine; alternate. An N6-lactoyllysine; alternate modification is found at K86. K86 is modified (N6,N6,N6-trimethyllysine; alternate). An omega-N-methylarginine mark is found at R87 and R93. The residue at position 109 (K109) is an N6-(2-hydroxyisobutyryl)lysine; alternate. An N6-lactoyllysine; alternate modification is found at K109. K109 carries the N6-glutaryllysine; alternate modification. K109 carries the N6-methyllysine; alternate modification. S113 carries an O-linked (GlcNAc) serine glycan. Position 116 is a phosphothreonine (T116). An N6-(2-hydroxyisobutyryl)lysine; alternate mark is found at K117 and K121. K117 and K121 each carry N6-(beta-hydroxybutyryl)lysine; alternate. N6-lactoyllysine; alternate occurs at positions 117 and 121. Residues K117 and K121 each carry the N6-glutaryllysine; alternate modification. An N6-succinyllysine; alternate mark is found at K117 and K121. An N6-malonyllysine; alternate modification is found at K117. K117 carries the N6-methylated lysine; alternate modification. A Glycyl lysine isopeptide (Lys-Gly) (interchain with G-Cter in ubiquitin); alternate cross-link involves residue K121.

This sequence belongs to the histone H2B family. As to quaternary structure, the nucleosome is a histone octamer containing two molecules each of H2A, H2B, H3 and H4 assembled in one H3-H4 heterotetramer and two H2A-H2B heterodimers. The octamer wraps approximately 147 bp of DNA. Heterodimer H2BC11 and H2AZ1 interacts with VPS72 (via N-terminal domain). Post-translationally, monoubiquitination at Lys-35 (H2BK34Ub) by the MSL1/MSL2 dimer is required for histone H3 'Lys-4' (H3K4me) and 'Lys-79' (H3K79me) methylation and transcription activation at specific gene loci, such as HOXA9 and MEIS1 loci. Similarly, monoubiquitination at Lys-121 (H2BK120Ub) by the RNF20/40 complex gives a specific tag for epigenetic transcriptional activation and is also prerequisite for histone H3 'Lys-4' and 'Lys-79' methylation. It also functions cooperatively with the FACT dimer to stimulate elongation by RNA polymerase II. H2BK120Ub also acts as a regulator of mRNA splicing: deubiquitination by USP49 is required for efficient cotranscriptional splicing of a large set of exons. Phosphorylation at Ser-37 (H2BS36ph) by AMPK in response to stress promotes transcription. Phosphorylated on Ser-15 (H2BS14ph) by STK4/MST1 during apoptosis; which facilitates apoptotic chromatin condensation. Also phosphorylated on Ser-15 in response to DNA double strand breaks (DSBs), and in correlation with somatic hypermutation and immunoglobulin class-switch recombination. In terms of processing, glcNAcylation at Ser-113 promotes monoubiquitination of Lys-121. It fluctuates in response to extracellular glucose, and associates with transcribed genes. Post-translationally, ADP-ribosylated by PARP1 or PARP2 on Ser-7 (H2BS6ADPr) in response to DNA damage. H2BS6ADPr promotes recruitment of CHD1L. Mono-ADP-ribosylated on Glu-3 (H2BE2ADPr) by PARP3 in response to single-strand breaks. Poly ADP-ribosylation on Glu-36 (H2BE35ADPr) by PARP1 regulates adipogenesis: it inhibits phosphorylation at Ser-37 (H2BS36ph), thereby blocking expression of pro-adipogenetic genes. Crotonylation (Kcr) is specifically present in male germ cells and marks testis-specific genes in post-meiotic cells, including X-linked genes that escape sex chromosome inactivation in haploid cells. Crotonylation marks active promoters and enhancers and confers resistance to transcriptional repressors. It is also associated with post-meiotically activated genes on autosomes. In terms of processing, lactylated in macrophages by EP300/P300 by using lactoyl-CoA directly derived from endogenous or exogenous lactate, leading to stimulates gene transcription.

Its subcellular location is the nucleus. It is found in the chromosome. Core component of nucleosome. Nucleosomes wrap and compact DNA into chromatin, limiting DNA accessibility to the cellular machineries which require DNA as a template. Histones thereby play a central role in transcription regulation, DNA repair, DNA replication and chromosomal stability. DNA accessibility is regulated via a complex set of post-translational modifications of histones, also called histone code, and nucleosome remodeling. Functionally, has broad antibacterial activity. May contribute to the formation of the functional antimicrobial barrier of the colonic epithelium, and to the bactericidal activity of amniotic fluid. The protein is Histone H2B type 1-J of Homo sapiens (Human).